The sequence spans 395 residues: uncharacterized protein (395 aa).

Disordered regions lie at residues 185 to 282 and 316 to 372; these read RREV…SSTA and GSST…TCSS. Residues 248-257 show a composition bias toward basic residues; that stretch reads LHLRTRHPHR. The span at 342-360 shows a compositional bias: low complexity; that stretch reads ARASTHSRSSPSASANSRY.

This is an uncharacterized protein from Streptomyces fradiae (Streptomyces roseoflavus).